Consider the following 402-residue polypeptide: NAD-dependent protein deacetylase sirtuin-7 (402 aa).

The interval 1-23 (MAAGGGLSRSERKAAERVRRLRE) is disordered. Over residues 9–23 (RSERKAAERVRRLRE) the composition is skewed to basic and acidic residues. One can recognise a Deacetylase sirtuin-type domain in the interval 83–330 (PEELRRKVRE…QLLMNELGLE (248 aa)). NAD(+)-binding positions include 108-127 (GAGI…NGVW) and 168-171 (QNCD). His188 functions as the Proton acceptor in the catalytic mechanism. Residues Cys196, Cys199, Cys226, and Cys229 each coordinate Zn(2+). Residues 269–271 (GSS), 298–300 (NLQ), and Cys316 each bind NAD(+). A disordered region spans residues 355-402 (SHSRKSLCRSREEAPPGDQSDPLASAPPILGGWFGRGCAKRAKRKKVA). Arg390 carries the post-translational modification Asymmetric dimethylarginine; alternate. Arg390 is subject to Omega-N-methylarginine; alternate. Over residues 392–402 (CAKRAKRKKVA) the composition is skewed to basic residues.

It belongs to the sirtuin family. Class IV subfamily. Interacts with UBTF and the RNA polymerase I complex. Interacts with components of the B-WICH complex, such as MYBBP1A, SMARCA5/SNF2H and BAZ1B/WSTF. Interacts with ELK4, leading to stabilization at target promoters for H3K18Ac deacetylation. Interacts with histone H2A and/or histone H2B. Interacts with DNMT1. Interacts with SIRT1. The cofactor is Zn(2+). Phosphorylated during mitosis. In terms of processing, methylation at Arg-390 by PRMT6 inhibits the H3K18Ac histone deacetylase activity, promoting mitochondria biogenesis and maintaining mitochondria respiration. Post-translationally, ubiquitinated via 'Lys-63'-linked ubiquitin chains. Deubiquitinated by USP7, inhibiting the H3K18Ac histone deacetylase activity and regulating gluconeogenesis. Ubiquitinated by E3 ubiquitin-protein ligase complex containing FBXO7; leading to proteasomal degradation. As to expression, detected in liver, spleen and testis. Detected in embryos.

Its subcellular location is the nucleus. It is found in the nucleolus. The protein localises to the nucleoplasm. The protein resides in the chromosome. It localises to the cytoplasm. It catalyses the reaction N(6)-acetyl-L-lysyl-[protein] + NAD(+) + H2O = 2''-O-acetyl-ADP-D-ribose + nicotinamide + L-lysyl-[protein]. It carries out the reaction N(6)-glutaryl-L-lysyl-[protein] + NAD(+) + H2O = 2''-O-glutaryl-ADP-D-ribose + nicotinamide + L-lysyl-[protein]. The catalysed reaction is N(6)-succinyl-L-lysyl-[protein] + NAD(+) + H2O = 2''-O-succinyl-ADP-D-ribose + nicotinamide + L-lysyl-[protein]. The enzyme catalyses N(6)-propanoyl-L-lysyl-[protein] + NAD(+) + H2O = 3''-O-propanoyl-ADP-D-ribose + nicotinamide + L-lysyl-[protein]. It catalyses the reaction N(6)-decanoyl-L-lysyl-[protein] + NAD(+) + H2O = 2''-O-decanoyl-ADP-D-ribose + nicotinamide + L-lysyl-[protein]. Its activity is regulated as follows. NAD-dependent protein-lysine deacetylase and deacylase activities are activated by nucleic acids. Histone deacetylase activity is activated by DNA. Protein-lysine deacylase activity is activated by RNA. H3K18Ac histone deacetylase activity is inhibited by methylation at Arg-390. H3K18Ac histone deacetylase activity is inhibited by deubiquitination by USP7. Functionally, NAD-dependent protein-lysine deacylase that can act both as a deacetylase or deacylase (desuccinylase, depropionylase and deglutarylase), depending on the context. Also acts as a dedecanoylase. Specifically mediates deacetylation of histone H3 at 'Lys-18' (H3K18Ac). In contrast to other histone deacetylases, displays strong preference for a specific histone mark, H3K18Ac, directly linked to control of gene expression. H3K18Ac is mainly present around the transcription start site of genes and has been linked to activation of nuclear hormone receptors; SIRT7 thereby acts as a transcription repressor. Moreover, H3K18 hypoacetylation has been reported as a marker of malignancy in various cancers and seems to maintain the transformed phenotype of cancer cells. Also able to mediate deacetylation of histone H3 at 'Lys-36' (H3K36Ac) in the context of nucleosomes. Also mediates deacetylation of non-histone proteins, such as ATM, CDK9, DDX21, DDB1, FBL, FKBP5/FKBP51, GABPB1, RAN, RRP9/U3-55K and POLR1E/PAF53. Enriched in nucleolus where it stimulates transcription activity of the RNA polymerase I complex. Acts by mediating the deacetylation of the RNA polymerase I subunit POLR1E/PAF53, thereby promoting the association of RNA polymerase I with the rDNA promoter region and coding region. In response to metabolic stress, SIRT7 is released from nucleoli leading to hyperacetylation of POLR1E/PAF53 and decreased RNA polymerase I transcription. Required to restore the transcription of ribosomal RNA (rRNA) at the exit from mitosis. Promotes pre-ribosomal RNA (pre-rRNA) cleavage at the 5'-terminal processing site by mediating deacetylation of RRP9/U3-55K, a core subunit of the U3 snoRNP complex. Mediates 'Lys-37' deacetylation of Ran, thereby regulating the nuclear export of NF-kappa-B subunit RELA/p65. Acts as a regulator of DNA damage repair by mediating deacetylation of ATM during the late stages of DNA damage response, promoting ATM dephosphorylation and deactivation. May also deacetylate p53/TP53 and promotes cell survival, however such data need additional confirmation. Suppresses the activity of the DCX (DDB1-CUL4-X-box) E3 ubiquitin-protein ligase complexes by mediating deacetylation of DDB1, which prevents the interaction between DDB1 and CUL4 (CUL4A or CUL4B). Activates RNA polymerase II transcription by mediating deacetylation of CDK9, thereby promoting 'Ser-2' phosphorylation of the C-terminal domain (CTD) of RNA polymerase II. Deacetylates FBL, promoting histone-glutamine methyltransferase activity of FBL. Acts as a regulator of mitochondrial function by catalyzing deacetylation of GABPB1. Regulates Akt/AKT1 activity by mediating deacetylation of FKBP5/FKBP51. Required to prevent R-loop-associated DNA damage and transcription-associated genomic instability by mediating deacetylation and subsequent activation of DDX21, thereby overcoming R-loop-mediated stalling of RNA polymerases. In addition to protein deacetylase activity, also acts as protein-lysine deacylase. Acts as a protein depropionylase by mediating depropionylation of Osterix (SP7), thereby regulating bone formation by osteoblasts. Acts as a histone deglutarylase by mediating deglutarylation of histone H4 on 'Lys-91' (H4K91glu); a mark that destabilizes nucleosomes by promoting dissociation of the H2A-H2B dimers from nucleosomes. Acts as a histone desuccinylase: in response to DNA damage, recruited to DNA double-strand breaks (DSBs) and catalyzes desuccinylation of histone H3 on 'Lys-122' (H3K122succ), thereby promoting chromatin condensation and DSB repair. Also promotes DSB repair by promoting H3K18Ac deacetylation, regulating non-homologous end joining (NHEJ). Along with its role in DNA repair, required for chromosome synapsis during prophase I of female meiosis by catalyzing H3K18Ac deacetylation. Involved in transcriptional repression of LINE-1 retrotransposon via H3K18Ac deacetylation, and promotes their association with the nuclear lamina. Required to stabilize ribosomal DNA (rDNA) heterochromatin and prevent cellular senescence induced by rDNA instability. Acts as a negative regulator of SIRT1 by preventing autodeacetylation of SIRT1, restricting SIRT1 deacetylase activity. The protein is NAD-dependent protein deacetylase sirtuin-7 of Mus musculus (Mouse).